We begin with the raw amino-acid sequence, 188 residues long: Ribosome-recycling factor (188 aa).

It belongs to the RRF family.

It is found in the cytoplasm. Responsible for the release of ribosomes from messenger RNA at the termination of protein biosynthesis. May increase the efficiency of translation by recycling ribosomes from one round of translation to another. The chain is Ribosome-recycling factor from Bradyrhizobium diazoefficiens (strain JCM 10833 / BCRC 13528 / IAM 13628 / NBRC 14792 / USDA 110).